A 235-amino-acid polypeptide reads, in one-letter code: Venom metalloproteinase antarease-like TserMP_B (235 aa).

The region spanning 4 to 233 (IVVEYYIVTD…PTASCIFQQC (230 aa)) is the Peptidase M12B domain. The cysteines at positions 137 and 228 are disulfide-linked. A Zn(2+)-binding site is contributed by histidine 161. Residue glutamate 162 is part of the active site. The Zn(2+) site is built by histidine 165 and histidine 171.

Belongs to the venom metalloproteinase (M12B) family. Requires Zn(2+) as cofactor. In terms of tissue distribution, expressed by the venom gland.

Its subcellular location is the secreted. Its activity is regulated as follows. Inhibited by EDTA. Its function is as follows. Acts as a metalloprotease. Penetrates intact tissue and specifically cleaves the vesicle-associated membrane protein 2 (VAMP2) (part of the SNARE complex) involved in pancreatic secretion, thus disrupting the normal vesicular traffic. In Tityus serrulatus (Brazilian scorpion), this protein is Venom metalloproteinase antarease-like TserMP_B.